Here is a 368-residue protein sequence, read N- to C-terminus: MNPKSSTPKIPRPKNAFILFRQHYHRILIDEWTAQGVEIPHNSNISKIIGTKWKGLQPEDKAHWENLAEKEKLEHERKYPEYKYKPVRKSKKKQLLLKEIEQQQQQQQKEQQQQKQSQPQLQQPFNNNIVLMKRAHSLSPSSSVSSSNSYQFQLNNDLKRLPIPSVNTSNYMVSRSLSGLPLTHDKTARDLPQLSSQLNSIPYYSAPHDPSTRHHYLNVAQAQPRANSTPQLPFISSIINNSSQTPVTTTTTSTTTATSSPGKFSSSPNSSVLENNRLNSINNSNQYLPPPLLPSLQDFQLDQYQQLKQMGPTYIVKPLSHTRNNLLSTTTPTHHHIPHIPNQNIPLHQIINSSNTEVTAKTSLVSPK.

The segment at residues 10 to 83 (IPRPKNAFIL…EHERKYPEYK (74 aa)) is a DNA-binding region (HMG box). Disordered regions lie at residues 100 to 121 (IEQQQQQQQKEQQQQKQSQPQL) and 242 to 273 (SSQTPVTTTTTSTTTATSSPGKFSSSPNSSVL). Residues 102–121 (QQQQQQQKEQQQQKQSQPQL) show a composition bias toward low complexity.

The protein resides in the nucleus. Functionally, transcription factor that represses the expression of HEM13, COX5B, ANB1, CYC7 or AAC3 (hypoxic function). Binds to the DNA sequence 5'-RRRTAACAAGAG-3'. The polypeptide is Repressor ROX1 (ROX1) (Saccharomyces cerevisiae (strain ATCC 204508 / S288c) (Baker's yeast)).